Consider the following 123-residue polypeptide: Ribosome-binding factor A (123 aa).

This sequence belongs to the RbfA family. In terms of assembly, monomer. Binds 30S ribosomal subunits, but not 50S ribosomal subunits or 70S ribosomes.

The protein localises to the cytoplasm. One of several proteins that assist in the late maturation steps of the functional core of the 30S ribosomal subunit. Associates with free 30S ribosomal subunits (but not with 30S subunits that are part of 70S ribosomes or polysomes). Required for efficient processing of 16S rRNA. May interact with the 5'-terminal helix region of 16S rRNA. The chain is Ribosome-binding factor A from Desulfatibacillum aliphaticivorans.